The chain runs to 258 residues: Acyl-[acyl-carrier-protein]--UDP-N-acetylglucosamine O-acyltransferase (258 aa).

The protein belongs to the transferase hexapeptide repeat family. LpxA subfamily. Homotrimer.

The protein resides in the cytoplasm. The enzyme catalyses a (3R)-hydroxyacyl-[ACP] + UDP-N-acetyl-alpha-D-glucosamine = a UDP-3-O-[(3R)-3-hydroxyacyl]-N-acetyl-alpha-D-glucosamine + holo-[ACP]. The protein operates within glycolipid biosynthesis; lipid IV(A) biosynthesis; lipid IV(A) from (3R)-3-hydroxytetradecanoyl-[acyl-carrier-protein] and UDP-N-acetyl-alpha-D-glucosamine: step 1/6. Functionally, involved in the biosynthesis of lipid A, a phosphorylated glycolipid that anchors the lipopolysaccharide to the outer membrane of the cell. The sequence is that of Acyl-[acyl-carrier-protein]--UDP-N-acetylglucosamine O-acyltransferase from Neisseria gonorrhoeae (strain ATCC 700825 / FA 1090).